Reading from the N-terminus, the 1372-residue chain is DNA-directed RNA polymerase subunit beta (1372 aa).

It belongs to the RNA polymerase beta chain family. In terms of assembly, the RNAP catalytic core consists of 2 alpha, 1 beta, 1 beta' and 1 omega subunit. When a sigma factor is associated with the core the holoenzyme is formed, which can initiate transcription.

The catalysed reaction is RNA(n) + a ribonucleoside 5'-triphosphate = RNA(n+1) + diphosphate. Functionally, DNA-dependent RNA polymerase catalyzes the transcription of DNA into RNA using the four ribonucleoside triphosphates as substrates. This is DNA-directed RNA polymerase subunit beta from Nitratidesulfovibrio vulgaris (strain DP4) (Desulfovibrio vulgaris).